The chain runs to 78 residues: RNA-binding protein Hfq (78 aa).

Residues 10–69 (DPFLNALRKEHVPVSIYLVNGIKLQGNIESFDQYVVLLRNTVTQMVYKHAISTVVPARPV) enclose the Sm domain.

It belongs to the Hfq family. Homohexamer.

Its function is as follows. RNA chaperone that binds small regulatory RNA (sRNAs) and mRNAs to facilitate mRNA translational regulation in response to envelope stress, environmental stress and changes in metabolite concentrations. Also binds with high specificity to tRNAs. This Paraburkholderia phymatum (strain DSM 17167 / CIP 108236 / LMG 21445 / STM815) (Burkholderia phymatum) protein is RNA-binding protein Hfq.